Reading from the N-terminus, the 417-residue chain is Signal recognition particle receptor FtsY (417 aa).

GTP contacts are provided by residues 228–235, 310–314, and 368–371; these read GINGTGKT, DTAGR, and TKID.

This sequence belongs to the GTP-binding SRP family. FtsY subfamily. Part of the signal recognition particle protein translocation system, which is composed of SRP and FtsY.

The protein resides in the cell membrane. The protein localises to the cytoplasm. The catalysed reaction is GTP + H2O = GDP + phosphate + H(+). Involved in targeting and insertion of nascent membrane proteins into the cytoplasmic membrane. Acts as a receptor for the complex formed by the signal recognition particle (SRP) and the ribosome-nascent chain (RNC). This chain is Signal recognition particle receptor FtsY, found in Methanosarcina acetivorans (strain ATCC 35395 / DSM 2834 / JCM 12185 / C2A).